We begin with the raw amino-acid sequence, 114 residues long: DNA-directed RNA polymerase subunit omega (114 aa).

Belongs to the RNA polymerase subunit omega family. As to quaternary structure, the RNAP catalytic core consists of 2 alpha, 1 beta, 1 beta' and 1 omega subunit. When a sigma factor is associated with the core the holoenzyme is formed, which can initiate transcription.

It carries out the reaction RNA(n) + a ribonucleoside 5'-triphosphate = RNA(n+1) + diphosphate. Functionally, promotes RNA polymerase assembly. Latches the N- and C-terminal regions of the beta' subunit thereby facilitating its interaction with the beta and alpha subunits. This chain is DNA-directed RNA polymerase subunit omega, found in Novosphingobium aromaticivorans (strain ATCC 700278 / DSM 12444 / CCUG 56034 / CIP 105152 / NBRC 16084 / F199).